Reading from the N-terminus, the 747-residue chain is Ubiquitin carboxyl-terminal hydrolase 13 (747 aa).

Positions 140–668 constitute a USP domain; sequence FGYENFGNTC…TAYVLFYKAM (529 aa). The active-site Nucleophile is Cys-149. 2 disordered regions span residues 172-305 and 318-367; these read PKKS…RPPD and YENP…RKKS. The segment covering 174-183 has biased composition (basic and acidic residues); it reads KSRESDQPRK. Phosphoserine is present on Ser-198. Over residues 225 to 235 the composition is skewed to polar residues; it reads PVNSVNSNTAG. A compositionally biased stretch (basic and acidic residues) spans 251 to 260; that stretch reads HVQDNNKKEG. Positions 319–343 are enriched in polar residues; it reads ENPSRGSSNSNNLDLKGESNSSLST. His-619 serves as the catalytic Proton acceptor.

Belongs to the peptidase C19 family.

The enzyme catalyses Thiol-dependent hydrolysis of ester, thioester, amide, peptide and isopeptide bonds formed by the C-terminal Gly of ubiquitin (a 76-residue protein attached to proteins as an intracellular targeting signal).. This Saccharomyces cerevisiae (strain ATCC 204508 / S288c) (Baker's yeast) protein is Ubiquitin carboxyl-terminal hydrolase 13 (UBP13).